The primary structure comprises 375 residues: Alcohol dehydrogenase class-3 chain L (375 aa).

Alanine 1 carries the N-acetylalanine modification. 7 residues coordinate Zn(2+): cysteine 46, histidine 68, cysteine 98, cysteine 101, cysteine 104, cysteine 112, and cysteine 175.

Belongs to the zinc-containing alcohol dehydrogenase family. Class-III subfamily. Homodimer or heterodimer with H chain. Zn(2+) is required as a cofactor.

The protein resides in the cytoplasm. The catalysed reaction is a primary alcohol + NAD(+) = an aldehyde + NADH + H(+). It carries out the reaction a secondary alcohol + NAD(+) = a ketone + NADH + H(+). It catalyses the reaction S-(hydroxymethyl)glutathione + NADP(+) = S-formylglutathione + NADPH + H(+). The enzyme catalyses S-(hydroxymethyl)glutathione + NAD(+) = S-formylglutathione + NADH + H(+). In terms of biological role, class-III ADH is remarkably ineffective in oxidizing ethanol, but it readily catalyzes the oxidation of long-chain primary alcohols and the oxidation of S-(hydroxymethyl) glutathione. This is Alcohol dehydrogenase class-3 chain L from Gadus morhua (Atlantic cod).